Reading from the N-terminus, the 236-residue chain is Ribonuclease HIII (236 aa).

Positions 9 to 236 (LYLIGSDESG…NVASFLKQLA (228 aa)) constitute an RNase H type-2 domain. A divalent metal cation-binding residues include D15, E16, and D122.

This sequence belongs to the RNase HII family. RnhC subfamily. The cofactor is a divalent metal cation.

It localises to the cytoplasm. It catalyses the reaction Endonucleolytic cleavage to 5'-phosphomonoester.. Functionally, endonuclease that specifically degrades the RNA of RNA-DNA hybrids. This is Ribonuclease HIII (rnhC) from Mycoplasma pneumoniae (strain ATCC 29342 / M129 / Subtype 1) (Mycoplasmoides pneumoniae).